The following is a 214-amino-acid chain: Proteasome subunit beta (214 aa).

Residues 1 to 11 (MLDTSQEIMKG) constitute a propeptide, removed in mature form; by autocatalysis. Residue T12 is the Nucleophile of the active site.

Belongs to the peptidase T1B family. In terms of assembly, the 20S proteasome core is composed of 14 alpha and 14 beta subunits that assemble into four stacked heptameric rings, resulting in a barrel-shaped structure. The two inner rings, each composed of seven catalytic beta subunits, are sandwiched by two outer rings, each composed of seven alpha subunits. The catalytic chamber with the active sites is on the inside of the barrel. Has a gated structure, the ends of the cylinder being occluded by the N-termini of the alpha-subunits. Is capped at one or both ends by the proteasome regulatory ATPase, PAN.

The protein resides in the cytoplasm. The catalysed reaction is Cleavage of peptide bonds with very broad specificity.. The formation of the proteasomal ATPase PAN-20S proteasome complex, via the docking of the C-termini of PAN into the intersubunit pockets in the alpha-rings, triggers opening of the gate for substrate entry. Interconversion between the open-gate and close-gate conformations leads to a dynamic regulation of the 20S proteasome proteolysis activity. Component of the proteasome core, a large protease complex with broad specificity involved in protein degradation. This is Proteasome subunit beta from Methanoculleus marisnigri (strain ATCC 35101 / DSM 1498 / JR1).